Reading from the N-terminus, the 390-residue chain is Neuromedin-B receptor (390 aa).

Residues 1–19 (MPSKSLSNLSVTTGANESG) show a composition bias toward polar residues. Positions 1–22 (MPSKSLSNLSVTTGANESGSVP) are disordered. The Extracellular portion of the chain corresponds to 1 to 41 (MPSKSLSNLSVTTGANESGSVPEGWERDFLPASDGTTTELV). Asn8 and Asn16 each carry an N-linked (GlcNAc...) asparagine glycan. Residues 42-65 (IRCVIPSLYLLIITVGLLGNIMLV) form a helical membrane-spanning segment. Residues 66-79 (KIFITNSAMRSVPN) lie on the Cytoplasmic side of the membrane. A helical transmembrane segment spans residues 80-99 (IFISNLAAGDLLLLLTCVPV). Topologically, residues 100-117 (DASRYFFDEWMFGKVGCK) are extracellular. Cys116 and Cys198 are disulfide-bonded. Residues 118–139 (LIPVIQLTSVGVSVFTLTALSA) traverse the membrane as a helical segment. The Cytoplasmic portion of the chain corresponds to 140-156 (DRYRAIVNPMDMQTSGA). The helical transmembrane segment at 157–177 (LLRTCVKAMGIWVVSVLLAVP) threads the bilayer. The Extracellular segment spans residues 178-211 (EAVFSEVARISSLDNSSFTACIPYPQTDELHPKI). An N-linked (GlcNAc...) asparagine glycan is attached at Asn192. A helical transmembrane segment spans residues 212 to 235 (HSVLIFLVYFLIPLAIISIYYYHI). Residues 236-266 (AKTLIKSAHNLPGEYNEHTKKQMETRKRLAK) are Cytoplasmic-facing. A helical transmembrane segment spans residues 267-287 (IVLVFVGCFIFCWFPNHILYM). The Extracellular segment spans residues 288–299 (YRSFNYNEIDPS). The chain crosses the membrane as a helical span at residues 300-327 (LGHMIVTLVARVLSFGNSCVNPFALYLL). Residues 328–390 (SESFRRHFNS…GHSMKQEMAL (63 aa)) lie on the Cytoplasmic side of the membrane. Cys341 carries S-palmitoyl cysteine lipidation. Ser352 bears the Phosphoserine mark.

It belongs to the G-protein coupled receptor 1 family. In terms of tissue distribution, expressed in epididymis (at protein level).

The protein localises to the cell membrane. Functionally, receptor for neuromedin-B. Contributes to the maintenance of basal sigh rate through signaling in the pre-Botzinger complex, a cluster of several thousand neurons in the ventrolateral medulla responsible for inspiration during respiratory activity. Contributes to the induction of sneezing following exposure to chemical irritants or allergens which causes release of NMB by nasal sensory neurons and activation of NMBR-expressing neurons in the sneeze-evoking region of the brainstem. These in turn activate neurons of the caudal ventral respiratory group, giving rise to the sneezing response. Contributes to induction of acute itch, possibly through its activation on dorsal root ganglion neurons by the NMB peptide. Plays a role in the innate immune response to influenza A virus infection by enhancing interferon alpha expression and reducing expression of IL6. Plays a role in CSF1-induced proliferation of osteoclast precursors by contributing to the positive regulation of the expression of the CSF1 receptor CSF1R. In Homo sapiens (Human), this protein is Neuromedin-B receptor (NMBR).